A 112-amino-acid chain; its full sequence is Putative pterin-4-alpha-carbinolamine dehydratase (112 aa).

This sequence belongs to the pterin-4-alpha-carbinolamine dehydratase family.

It carries out the reaction (4aS,6R)-4a-hydroxy-L-erythro-5,6,7,8-tetrahydrobiopterin = (6R)-L-erythro-6,7-dihydrobiopterin + H2O. The sequence is that of Putative pterin-4-alpha-carbinolamine dehydratase from Shewanella woodyi (strain ATCC 51908 / MS32).